Here is a 479-residue protein sequence, read N- to C-terminus: FAD-dependent monooxygenase cdmI (479 aa).

Residues Glu43, Gly57, and Arg116 each coordinate FAD. N-linked (GlcNAc...) asparagine glycans are attached at residues Asn156 and Asn198. FAD-binding residues include Asp315 and Ala328. Residues 453 to 473 (PFILAVLAGLGFLLTMFKQQW) traverse the membrane as a helical segment.

The protein belongs to the paxM FAD-dependent monooxygenase family. The cofactor is FAD.

It localises to the membrane. The enzyme catalyses verruculide C + AH2 + O2 = verruculide C epoxide + A + H2O. Its pathway is secondary metabolite biosynthesis; terpenoid biosynthesis. Its function is as follows. FAD-dependent monooxygenase; part of the gene cluster that mediates the biosynthesis of chrodrimanin B, a meroterpenoid that acts as a potent blocker of insect GABA-gated chloride channels. The first step of the pathway is the biosynthesis of 6-hydroxymellein by the polyketide synthase cdmE. The prenyltransferase cdmH acts as a 6-hydroxymellein 5-farnesyltransferase and produces the hydrophobic metabolite verruculide C. The FAD-dependent monooxygenase cdmI further converts verruculide C into verruculide B. The terpene cyclase cdmG then produced the pentacyclic molecule 3-hydroxypentacecilide A, the backbone structure of chrodrimanin B, via folding the farnesyl moiety of the substrate into the chair-boat conformation. The short-chain dehydrogenase/reductase cdmF functions as the 3-OH dehydrogenase that oxidizes the C-3 hydroxyl group of 3-hydroxypentacecilide A and produces chrodrimanin C, the dehydrogenated product of 3-hydroxypentacecilide A. The cytochrome P450 monooxygenase cdmJ then accepts both 3-hydroxypentacecilide A and chrodrimanin C and functions as a C-7-beta-hydroxylase to produce respectively chrodrimanin H and chrodrimanin F. The dioxygenase cdmA accepts chrodrimanin H to afford chrodrimanin E, which is further transformed to chrodrimanin A by the dioxygenase cdmD. CdmA can also accept chrodrimanin C as substrate to convert it into verruculide A, which is further converted into chrodrimanin T by cdmD. The last step of the biosynthesis is proposed to be performed by the acetyltransferase cdmC which acetylates chrodrimanin A to yield chrodrimanin B. The pathway may also lead to the production of additional shunt products, including chrodrimanins T and U. This Talaromyces verruculosus (Penicillium verruculosum) protein is FAD-dependent monooxygenase cdmI.